The following is a 229-amino-acid chain: Potassium/proton antiporter CemA (229 aa).

The next 3 helical transmembrane spans lie at 6-26 (AFIP…ISLC), 107-127 (ILHF…SFWG), and 189-209 (ILSG…KYWI).

Belongs to the CemA family.

It is found in the plastid. The protein localises to the chloroplast inner membrane. It catalyses the reaction K(+)(in) + H(+)(out) = K(+)(out) + H(+)(in). Its function is as follows. Contributes to K(+)/H(+) antiport activity by supporting proton efflux to control proton extrusion and homeostasis in chloroplasts in a light-dependent manner to modulate photosynthesis. Prevents excessive induction of non-photochemical quenching (NPQ) under continuous-light conditions. Indirectly promotes efficient inorganic carbon uptake into chloroplasts. In Nasturtium officinale (Watercress), this protein is Potassium/proton antiporter CemA.